Reading from the N-terminus, the 335-residue chain is Dihydroorotate dehydrogenase (quinone) (335 aa).

FMN-binding positions include 58–62 (AGADK) and Thr82. Lys62 lines the substrate pocket. Residue 107–111 (NRNGF) participates in substrate binding. Positions 135 and 168 each coordinate FMN. A substrate-binding site is contributed by Asn168. Ser171 serves as the catalytic Nucleophile. Asn173 is a binding site for substrate. Residues Lys213 and Gly241 each contribute to the FMN site. Position 242 to 243 (242 to 243 (NT)) interacts with substrate. FMN contacts are provided by residues Gly264, Gly293, and 314–315 (YS).

The protein belongs to the dihydroorotate dehydrogenase family. Type 2 subfamily. As to quaternary structure, monomer. The cofactor is FMN.

Its subcellular location is the cell membrane. It carries out the reaction (S)-dihydroorotate + a quinone = orotate + a quinol. It participates in pyrimidine metabolism; UMP biosynthesis via de novo pathway; orotate from (S)-dihydroorotate (quinone route): step 1/1. Its function is as follows. Catalyzes the conversion of dihydroorotate to orotate with quinone as electron acceptor. The protein is Dihydroorotate dehydrogenase (quinone) of Actinobacillus pleuropneumoniae serotype 7 (strain AP76).